A 265-amino-acid polypeptide reads, in one-letter code: Cytosolic Fe-S cluster assembly factor NUBP2 homolog (265 aa).

22-29 is an ATP binding site; it reads GKGGVGKS. [4Fe-4S] cluster contacts are provided by Cys-196 and Cys-199.

It belongs to the Mrp/NBP35 ATP-binding proteins family. NUBP2/CFD1 subfamily. Heterotetramer of 2 NUBP1 and 2 NUBP2 chains. [4Fe-4S] cluster serves as cofactor.

It is found in the cytoplasm. Functionally, component of the cytosolic iron-sulfur (Fe/S) protein assembly (CIA) machinery. Required for maturation of extramitochondrial Fe-S proteins. The NUBP1-NUBP2 heterotetramer forms a Fe-S scaffold complex, mediating the de novo assembly of an Fe-S cluster and its transfer to target apoproteins. In Trichoplax adhaerens (Trichoplax reptans), this protein is Cytosolic Fe-S cluster assembly factor NUBP2 homolog.